The sequence spans 146 residues: D-aminoacyl-tRNA deacylase (146 aa).

The Gly-cisPro motif, important for rejection of L-amino acids signature appears at 137-138 (GP).

This sequence belongs to the DTD family. In terms of assembly, homodimer.

It localises to the cytoplasm. It carries out the reaction glycyl-tRNA(Ala) + H2O = tRNA(Ala) + glycine + H(+). It catalyses the reaction a D-aminoacyl-tRNA + H2O = a tRNA + a D-alpha-amino acid + H(+). Its function is as follows. An aminoacyl-tRNA editing enzyme that deacylates mischarged D-aminoacyl-tRNAs. Also deacylates mischarged glycyl-tRNA(Ala), protecting cells against glycine mischarging by AlaRS. Acts via tRNA-based rather than protein-based catalysis; rejects L-amino acids rather than detecting D-amino acids in the active site. By recycling D-aminoacyl-tRNA to D-amino acids and free tRNA molecules, this enzyme counteracts the toxicity associated with the formation of D-aminoacyl-tRNA entities in vivo and helps enforce protein L-homochirality. The protein is D-aminoacyl-tRNA deacylase of Bacillus mycoides (strain KBAB4) (Bacillus weihenstephanensis).